The primary structure comprises 199 residues: Early activation antigen CD69 (199 aa).

Positions 1-29 (MSSENCFVAENSSLHPESGQENDATSPHF) are disordered. At 1-40 (MSSENCFVAENSSLHPESGQENDATSPHFSTRHEGSFQVP) the chain is on the cytoplasmic side. A helical; Signal-anchor for type II membrane protein transmembrane segment spans residues 41–61 (VLCAVMNVVFITILIIALIAL). Residues 62-199 (SVGQYNCPGQ…LYWICNKPYK (138 aa)) are Extracellular-facing. Intrachain disulfides connect Cys85/Cys96, Cys113/Cys194, and Cys173/Cys186. The C-type lectin domain maps to 92-195 (YQRKCYFIST…CEKNLYWICN (104 aa)). N-linked (GlcNAc...) asparagine glycosylation is present at Asn166.

As to quaternary structure, homodimer; disulfide-linked. Interacts with S100A8 and S100A9. Interacts with galactin-1/LGALS1. Interacts with S1PR1; this interaction mediates S1PR1 degradation. Post-translationally, constitutive Ser/Thr phosphorylation in both mature thymocytes and activated T-lymphocytes. As to expression, expressed on the surface of activated T-cells, B-cells, natural killer cells, neutrophils, eosinophils, epidermal Langerhans cells and platelets.

It localises to the cell membrane. In terms of biological role, transmembrane protein expressed mainly on T-cells resident in mucosa that plays an essential role in immune cell homeostasis. Rapidly expressed on the surface of platelets, T-lymphocytes and NK cells upon activation by various stimuli, such as antigen recognition or cytokine signaling, stimulates different signaling pathways in different cell types. Negatively regulates Th17 cell differentiation through its carbohydrate dependent interaction with galectin-1/LGALS1 present on immature dendritic cells. Association of CD69 cytoplasmic tail with the JAK3/STAT5 signaling pathway regulates the transcription of RORgamma/RORC and, consequently, differentiation toward the Th17 lineage. Also acts via the S100A8/S100A9 complex present on peripheral blood mononuclear cells to promote the conversion of naive CD4 T-cells into regulatory T-cells. Acts as an oxidized low-density lipoprotein (oxLDL) receptor in CD4 T-lymphocytes and negatively regulates the inflammatory response by inducing the expression of PDCD1 through the activation of NFAT. Participates in adipose tissue-derived mesenchymal stem cells (ASCs)-mediated protection against P.aeruginosa infection. Mechanistically, specifically recognizes P.aeruginosa to promote ERK1 activation, followed by granulocyte-macrophage colony-stimulating factor (GM-CSF) and other inflammatory cytokines secretion. In eosinophils, induces IL-10 production through the ERK1/2 pathway. Negatively regulates the chemotactic responses of effector lymphocytes and dendritic cells (DCs) to sphingosine 1 phosphate/S1P by acting as a S1PR1 receptor agonist and facilitating the internalization and degradation of the receptor. This chain is Early activation antigen CD69 (CD69), found in Homo sapiens (Human).